The following is a 114-amino-acid chain: Large ribosomal subunit protein bL20 (114 aa).

It belongs to the bacterial ribosomal protein bL20 family.

Its function is as follows. Binds directly to 23S ribosomal RNA and is necessary for the in vitro assembly process of the 50S ribosomal subunit. It is not involved in the protein synthesizing functions of that subunit. This Anaeromyxobacter sp. (strain Fw109-5) protein is Large ribosomal subunit protein bL20.